Consider the following 125-residue polypeptide: Large ribosomal subunit protein bL12 (125 aa).

The protein belongs to the bacterial ribosomal protein bL12 family. In terms of assembly, homodimer. Part of the ribosomal stalk of the 50S ribosomal subunit. Forms a multimeric L10(L12)X complex, where L10 forms an elongated spine to which 2 to 4 L12 dimers bind in a sequential fashion. Binds GTP-bound translation factors.

Its function is as follows. Forms part of the ribosomal stalk which helps the ribosome interact with GTP-bound translation factors. Is thus essential for accurate translation. The polypeptide is Large ribosomal subunit protein bL12 (Campylobacter jejuni subsp. jejuni serotype O:2 (strain ATCC 700819 / NCTC 11168)).